A 178-amino-acid polypeptide reads, in one-letter code: CASP-like protein 4D1 (178 aa).

The Cytoplasmic segment spans residues 1–14 (MAPPPPSPPSVTLR). The helical transmembrane segment at 15-35 (TVLLLLRVLTAAFLVITVVLI) threads the bilayer. Residues 36 to 60 (STNTVTLEVSSTSIKMRFNDVYAYR) lie on the Extracellular side of the membrane. A helical membrane pass occupies residues 61–81 (YMLSAAVIGLLYAVVQLFLTI). The Cytoplasmic segment spans residues 82-149 (SQFATGTTHP…KFFSKGYASA (68 aa)). Residues 150–170 (SLLLFAFVSLAVLSVFSSLAL) form a helical membrane-spanning segment. Residues 171–178 (SKRPIQVS) lie on the Extracellular side of the membrane.

The protein belongs to the Casparian strip membrane proteins (CASP) family. Homodimer and heterodimers.

Its subcellular location is the cell membrane. The protein is CASP-like protein 4D1 of Arabidopsis lyrata subsp. lyrata (Lyre-leaved rock-cress).